Consider the following 190-residue polypeptide: Cysteine dioxygenase (190 aa).

H78, H80, and H132 together coordinate Fe cation. The 3'-(S-cysteinyl)-tyrosine (Cys-Tyr) cross-link spans C85 to Y149.

It belongs to the cysteine dioxygenase family. Fe cation is required as a cofactor. The thioether cross-link between Cys-85 and Tyr-149 plays a structural role through stabilizing the Fe(2+) ion, and prevents the production of highly damaging free hydroxyl radicals by holding the oxygen radical via hydroxyl hydrogen.

It carries out the reaction L-cysteine + O2 = 3-sulfino-L-alanine + H(+). It functions in the pathway organosulfur biosynthesis; taurine biosynthesis; hypotaurine from L-cysteine: step 1/2. The polypeptide is Cysteine dioxygenase (cdo-1) (Caenorhabditis briggsae).